Consider the following 272-residue polypeptide: MDSMMNQKTVLAVTDDVVLPVSSVLAIMKELGKEVIESFDPLIITQASTINQFPLDASSVEAVLAISKTSDFPSDKICGEFSRILKPGGTVSVCKVLEGETGEIQQTIQRRVTLAGFLEPQCLDLKSIKLSTFSLSFGIKAKKPSWKIGSSFALKKPVTNLFKIDLDDDVDLIDEDSLLTEEDLMKPQLPVASGCETTKKACKNCVCGRAEIEEKAVKLGLTEDQIENPQSSCGSCGLGDAFRCGTCPYKGLPPFKLGEKVTLSQNFLEADI.

Positions 1 to 156 are N-terminal SAM-like domain; the sequence is MDSMMNQKTV…KIGSSFALKK (156 aa). Residues 157 to 185 form a linker region; the sequence is PVTNLFKIDLDDDVDLIDEDSLLTEEDLM. The [2Fe-2S] cluster site is built by C195, C202, C205, and C207. Residues 195-207 form a fe-S binding site A region; sequence CETTKKACKNCVC. The [4Fe-4S] cluster site is built by C233, C236, C244, and C247. 2 consecutive short sequence motifs (cx2C motif) follow at residues 233–236 and 244–247; these read CGSC and CGTC. The fe-S binding site B stretch occupies residues 233-247; that stretch reads CGSCGLGDAFRCGTC.

Belongs to the anamorsin family. In terms of assembly, monomer. Interacts with ATR3. It depends on [2Fe-2S] cluster as a cofactor. The cofactor is [4Fe-4S] cluster.

The protein localises to the cytoplasm. Its subcellular location is the mitochondrion intermembrane space. Functionally, component of the cytosolic iron-sulfur (Fe-S) protein assembly (CIA) machinery. Required for the maturation of extramitochondrial Fe-S proteins. Part of an electron transfer chain functioning in an early step of cytosolic Fe-S biogenesis, facilitating the de novo assembly of a [4Fe-4S] cluster on the cytosolic Fe-S scaffold complex. Electrons are transferred from NADPH via FAD- and FMN-containing diflavin oxidoreductase TAH18/ATR3. Together with the diflavin oxidoreductase, also required for the assembly of the diferric tyrosyl radical cofactor of ribonucleotide reductase (RNR), probably by providing electrons for reduction during radical cofactor maturation in the catalytic small subunit. Required for embryo development. In Arabidopsis thaliana (Mouse-ear cress), this protein is Anamorsin homolog.